A 283-amino-acid chain; its full sequence is Pantothenate synthetase (283 aa).

ATP is bound at residue 30 to 37 (MGNLHAGH). Residue H37 is the Proton donor of the active site. Q61 contributes to the (R)-pantoate binding site. Q61 is a binding site for beta-alanine. 149 to 152 (GEKD) lines the ATP pocket. Q155 is a (R)-pantoate binding site. ATP is bound by residues V178 and 186–189 (LSSR).

The protein belongs to the pantothenate synthetase family. Homodimer.

The protein localises to the cytoplasm. The catalysed reaction is (R)-pantoate + beta-alanine + ATP = (R)-pantothenate + AMP + diphosphate + H(+). It functions in the pathway cofactor biosynthesis; (R)-pantothenate biosynthesis; (R)-pantothenate from (R)-pantoate and beta-alanine: step 1/1. Catalyzes the condensation of pantoate with beta-alanine in an ATP-dependent reaction via a pantoyl-adenylate intermediate. This is Pantothenate synthetase from Pseudomonas aeruginosa (strain UCBPP-PA14).